A 291-amino-acid chain; its full sequence is MSKSLDISTTEAEQTVTEVIDTIVATTPDVRRAVADYRGQSNSVNPTGDDQLAADLRADELFEQRVLGIDGVASYASEERADVKTTDGRLHVAMDPLDGSSNLEPNSGMGTIFGIYSEQPPTVGTNLLAAGFVIYGPITSMVVARDGSVREYILEDGDKRVVDDDVTVPEDPTVFGFGGGVDSWTDEFESYAEAVRHELKLRYGGAMVADINQVLTYGGIFSYPALESRPEGKLRVQFEGHPMAYILESAGGRSSDGDQSLLEIEPDELHERTPLYLGNDDLIDRLEANID.

Mg(2+)-binding residues include glutamate 78, aspartate 95, leucine 97, and aspartate 98. Substrate-binding positions include 98–101 (DGSS), tyrosine 203, and lysine 233. Glutamate 239 is a Mg(2+) binding site.

It belongs to the FBPase class 1 family. In terms of assembly, homotetramer. Mg(2+) serves as cofactor.

Its subcellular location is the cytoplasm. The enzyme catalyses beta-D-fructose 1,6-bisphosphate + H2O = beta-D-fructose 6-phosphate + phosphate. It functions in the pathway carbohydrate biosynthesis; gluconeogenesis. This chain is Fructose-1,6-bisphosphatase class 1 1, found in Haloarcula marismortui (strain ATCC 43049 / DSM 3752 / JCM 8966 / VKM B-1809) (Halobacterium marismortui).